A 198-amino-acid polypeptide reads, in one-letter code: Small ribosomal subunit protein uS4c (198 aa).

The disordered stretch occupies residues 17–40 (TLPGLTSKRPKNRKDSMNRSSSRK). One can recognise an S4 RNA-binding domain in the interval 88–154 (MRLDKSFSIG…IKKNIDLFQR (67 aa)).

This sequence belongs to the universal ribosomal protein uS4 family. As to quaternary structure, part of the 30S ribosomal subunit. Contacts protein S5. The interaction surface between S4 and S5 is involved in control of translational fidelity.

The protein resides in the plastid. It localises to the chloroplast. In terms of biological role, one of the primary rRNA binding proteins, it binds directly to 16S rRNA where it nucleates assembly of the body of the 30S subunit. With S5 and S12 plays an important role in translational accuracy. This chain is Small ribosomal subunit protein uS4c (rps4), found in Pinus thunbergii (Japanese black pine).